Reading from the N-terminus, the 445-residue chain is D-serine transporter DsdX (445 aa).

At 1 to 4 the chain is on the cytoplasmic side; it reads MHSQ. Residues 5 to 25 traverse the membrane as a helical segment; the sequence is IWVVSTLLISIVLIVLTIVKF. Residues 26–28 lie on the Periplasmic side of the membrane; that stretch reads KFH. Residues 29–49 form a helical membrane-spanning segment; that stretch reads PFLALLLASFFVGTMMGMGPL. Topologically, residues 50-56 are cytoplasmic; it reads DMVNAIE. A helical transmembrane segment spans residues 57–77; the sequence is SGIGGTLGFLAAVIGLGTILG. Over 78-105 the chain is Periplasmic; the sequence is KMMEVSGAAERIGLTLQRCRWLSVDVIM. The chain crosses the membrane as a helical span at residues 106-126; the sequence is VLVGLICGITLFVEVGVVLLI. The Cytoplasmic portion of the chain corresponds to 127 to 139; that stretch reads PLAFSIAKKTNTS. Residues 140–160 traverse the membrane as a helical segment; it reads LLKLAIPLCTALMAVHCVVPP. Residues 161–177 lie on the Periplasmic side of the membrane; sequence HPAALYVANKLGADIGS. A helical transmembrane segment spans residues 178–198; the sequence is VIVYGLLVGLMASLIGGPLFL. The Cytoplasmic segment spans residues 199–223; it reads KFLGQRLPFKPVPTEFADLKVRDEK. Residues 224 to 244 traverse the membrane as a helical segment; the sequence is TLPSLGATLFTILLPIALMLV. Over 245–257 the chain is Periplasmic; that stretch reads KTIAELNMARESG. The chain crosses the membrane as a helical span at residues 258–278; it reads LYILVEFIGNPITAMFIAVFV. Residues 279–301 lie on the Cytoplasmic side of the membrane; sequence AYYVLGIRQHMSMGTMLTHTENG. Residues 302–322 traverse the membrane as a helical segment; that stretch reads FGSIANILLIIGAGGAFNAIL. The Periplasmic portion of the chain corresponds to 323-342; it reads KSSSLADTLAVILSNMHMHP. The next 3 helical transmembrane spans lie at 343–363, 364–384, and 385–405; these read ILLA…ATVA, MMGA…ISPE, and IIAI…DSLF. Residues 406 to 424 lie on the Cytoplasmic side of the membrane; that stretch reads WLVKQYCGATLNETFKYYT. The chain crosses the membrane as a helical span at residues 425–445; the sequence is TATFIASVVALAGTFLLSFII.

It belongs to the GntP permease family.

Its subcellular location is the cell inner membrane. Functionally, a D-serine-specific transporter, may function as a H(+) symporter. This Escherichia coli (strain K12) protein is D-serine transporter DsdX.